Consider the following 258-residue polypeptide: Putative phosphoenolpyruvate synthase regulatory protein (258 aa).

Gly-146–Thr-153 serves as a coordination point for ADP.

This sequence belongs to the pyruvate, phosphate/water dikinase regulatory protein family. PSRP subfamily.

The catalysed reaction is [pyruvate, water dikinase] + ADP = [pyruvate, water dikinase]-phosphate + AMP + H(+). The enzyme catalyses [pyruvate, water dikinase]-phosphate + phosphate + H(+) = [pyruvate, water dikinase] + diphosphate. Bifunctional serine/threonine kinase and phosphorylase involved in the regulation of the phosphoenolpyruvate synthase (PEPS) by catalyzing its phosphorylation/dephosphorylation. The protein is Putative phosphoenolpyruvate synthase regulatory protein of Thiobacillus denitrificans (strain ATCC 25259 / T1).